We begin with the raw amino-acid sequence, 213 residues long: Neuromodulin (213 aa).

The disordered stretch occupies residues 1–213 (MLCCIRRTKP…AEEAGKDQNV (213 aa)). Residues Cys3 and Cys4 are each lipidated (S-palmitoyl cysteine). Over residues 9–33 (KPVEKNEEADQEIKQDGTKPEENAH) the composition is skewed to basic and acidic residues. One can recognise an IQ domain in the interval 32 to 61 (AHKAATKIQASFRGHITRKKMKDEDKDGEN). Over residues 57-73 (KDGENDTAPDESAETEE) the composition is skewed to acidic residues. Over residues 74 to 86 (KEERVSPSEEKPV) the composition is skewed to basic and acidic residues. Low complexity predominate over residues 102–122 (PNSPAAEAPPTAATDSAPSDT). Positions 157 to 169 (EKEEEEEEEEEEE) are enriched in acidic residues. Over residues 191–213 (QTDKKEALDDSKPAEEAGKDQNV) the composition is skewed to basic and acidic residues.

The protein belongs to the neuromodulin family. As to quaternary structure, binds calmodulin with a greater affinity in the absence of Ca(2+) than in its presence. Palmitoylated. Palmitoylation is essential for plasma membrane association.

It localises to the cell membrane. The protein resides in the cell projection. It is found in the growth cone membrane. The protein localises to the synapse. Its subcellular location is the filopodium membrane. Its function is as follows. This protein is associated with nerve growth. It is a major component of the motile 'growth cones' that form the tips of elongating axons. Plays a role in axonal and dendritic filopodia induction. The sequence is that of Neuromodulin (gap43) from Carassius auratus (Goldfish).